The sequence spans 492 residues: MIPVVALVGRPNVGKSTLFNRLTRTRDALVADFPGLTRDRKYGRAEVEGREFICIDTGGIDGSEEGVETRMAEQSLLAIEEADVVLFMVDARAGLMPADEAIAKHLRSRQKPTFLVANKTDGLDPDQAVSDFYSLGLGEIHPIAASHGRGVTSLLEHVLVPWMDDVDPPEEVDEEAEYWAQFEAEQNGELVEEEEDDFNPQDLPIKLAIVGRPNVGKSTLTNRILGEDRVVVFDMPGTTRDSIYIPMERDGREFVLIDTAGVRKRGKITDVVEKFSVIKTLQAIEDANVVLLVIDAREGISDQDLSLLGFILNSGRSLVIVVNKWDGLSQEVKEEVKETLDYRLGFIDFARVHFISALHGSGVGNLFESVREAYDSSTRRVSTALLTRIMKMAEEDHQPPMVRGRRVKLKYAHAGGYNPPIVVIHGTQVKDLPDSYKRYLMNYFRKSLDVMGTPIRIQFKEGANPFANKRNTLTPNQLRKRKRLIKHIKKSK.

2 consecutive EngA-type G domains span residues 3-166 (PVVA…MDDV) and 205-378 (IKLA…DSST). Residues 9-16 (GRPNVGKS), 56-60 (DTGGI), 118-121 (NKTD), 211-218 (GRPNVGKS), 258-262 (DTAGV), and 323-326 (NKWD) each bind GTP. The region spanning 379–463 (RRVSTALLTR…PIRIQFKEGA (85 aa)) is the KH-like domain.

Belongs to the TRAFAC class TrmE-Era-EngA-EngB-Septin-like GTPase superfamily. EngA (Der) GTPase family. As to quaternary structure, associates with the 50S ribosomal subunit.

GTPase that plays an essential role in the late steps of ribosome biogenesis. This is GTPase Der from Cronobacter sakazakii (strain ATCC BAA-894) (Enterobacter sakazakii).